The chain runs to 347 residues: Heat-inducible transcription repressor HrcA (347 aa).

It belongs to the HrcA family.

Its function is as follows. Negative regulator of class I heat shock genes (grpE-dnaK-dnaJ and groELS operons). Prevents heat-shock induction of these operons. The chain is Heat-inducible transcription repressor HrcA from Nocardia farcinica (strain IFM 10152).